The sequence spans 504 residues: Maturase K (504 aa).

Belongs to the intron maturase 2 family. MatK subfamily.

It localises to the plastid. It is found in the chloroplast. In terms of biological role, usually encoded in the trnK tRNA gene intron. Probably assists in splicing its own and other chloroplast group II introns. The sequence is that of Maturase K from Gossypium turneri (Cotton).